Here is a 1050-residue protein sequence, read N- to C-terminus: Valine--tRNA ligase (1050 aa).

Over residues 37-57 (EKKAAASDKPVKEAKAKKEQT) the composition is skewed to basic and acidic residues. Residues 37–72 (EKKAAASDKPVKEAKAKKEQTVEAAEPVDQTPTGQR) form a disordered region. Residues 127 to 137 (PNVTGNLHVGH) carry the 'HIGH' region motif. The 'KMSKS' region signature appears at 642–646 (KMSKS). Lys645 lines the ATP pocket.

The protein belongs to the class-I aminoacyl-tRNA synthetase family.

The catalysed reaction is tRNA(Val) + L-valine + ATP = L-valyl-tRNA(Val) + AMP + diphosphate. This is Valine--tRNA ligase from Caenorhabditis elegans.